The primary structure comprises 601 residues: Elongation factor 4 (601 aa).

The region spanning 6–188 is the tr-type G domain; it reads NYIRNFSIVA…AIVRQLPPPH (183 aa). GTP is bound by residues 18-23 and 135-138; these read DHGKST and NKVD.

This sequence belongs to the TRAFAC class translation factor GTPase superfamily. Classic translation factor GTPase family. LepA subfamily.

It is found in the cell inner membrane. It catalyses the reaction GTP + H2O = GDP + phosphate + H(+). Its function is as follows. Required for accurate and efficient protein synthesis under certain stress conditions. May act as a fidelity factor of the translation reaction, by catalyzing a one-codon backward translocation of tRNAs on improperly translocated ribosomes. Back-translocation proceeds from a post-translocation (POST) complex to a pre-translocation (PRE) complex, thus giving elongation factor G a second chance to translocate the tRNAs correctly. Binds to ribosomes in a GTP-dependent manner. In Bartonella quintana (strain Toulouse) (Rochalimaea quintana), this protein is Elongation factor 4.